A 254-amino-acid polypeptide reads, in one-letter code: Ribonuclease PH (254 aa).

Phosphate is bound by residues arginine 90 and 128-130 (GTR).

It belongs to the RNase PH family. In terms of assembly, homohexameric ring arranged as a trimer of dimers.

It catalyses the reaction tRNA(n+1) + phosphate = tRNA(n) + a ribonucleoside 5'-diphosphate. Its function is as follows. Phosphorolytic 3'-5' exoribonuclease that plays an important role in tRNA 3'-end maturation. Removes nucleotide residues following the 3'-CCA terminus of tRNAs; can also add nucleotides to the ends of RNA molecules by using nucleoside diphosphates as substrates, but this may not be physiologically important. Probably plays a role in initiation of 16S rRNA degradation (leading to ribosome degradation) during starvation. This is Ribonuclease PH from Corynebacterium kroppenstedtii (strain DSM 44385 / JCM 11950 / CIP 105744 / CCUG 35717).